The sequence spans 281 residues: uncharacterized protein (281 aa).

A run of 4 helical transmembrane segments spans residues 8-28 (ALPV…FIWS), 97-117 (LAVA…RGYG), 147-167 (PARI…GLAV), and 210-230 (IASV…IVPA).

It to S.pombe bem46 and yeast YNL320w.

The protein localises to the cell membrane. This is an uncharacterized protein from Mycobacterium tuberculosis (strain ATCC 25618 / H37Rv).